The following is a 334-amino-acid chain: ATP-dependent kinase YFH7 (334 aa).

ATP is bound at residue 30 to 38 (GHPGSGKST).

Belongs to the YFH7 family.

ATP-dependent kinase that could be involved in endoplasmic reticulum membrane assembly. The polypeptide is ATP-dependent kinase YFH7 (YFH7) (Eremothecium gossypii (strain ATCC 10895 / CBS 109.51 / FGSC 9923 / NRRL Y-1056) (Yeast)).